A 78-amino-acid chain; its full sequence is Large ribosomal subunit protein bL31 (78 aa).

Zn(2+) contacts are provided by Cys-16, Cys-18, Cys-38, and Cys-41.

This sequence belongs to the bacterial ribosomal protein bL31 family. Type A subfamily. Part of the 50S ribosomal subunit. The cofactor is Zn(2+).

Its function is as follows. Binds the 23S rRNA. This Parafrankia sp. (strain EAN1pec) protein is Large ribosomal subunit protein bL31.